We begin with the raw amino-acid sequence, 223 residues long: Deoxyribose-phosphate aldolase (223 aa).

Catalysis depends on Asp-89, which acts as the Proton donor/acceptor. The active-site Schiff-base intermediate with acetaldehyde is Lys-152. Lys-181 serves as the catalytic Proton donor/acceptor.

This sequence belongs to the DeoC/FbaB aldolase family. DeoC type 1 subfamily.

It localises to the cytoplasm. The catalysed reaction is 2-deoxy-D-ribose 5-phosphate = D-glyceraldehyde 3-phosphate + acetaldehyde. It functions in the pathway carbohydrate degradation; 2-deoxy-D-ribose 1-phosphate degradation; D-glyceraldehyde 3-phosphate and acetaldehyde from 2-deoxy-alpha-D-ribose 1-phosphate: step 2/2. Its function is as follows. Catalyzes a reversible aldol reaction between acetaldehyde and D-glyceraldehyde 3-phosphate to generate 2-deoxy-D-ribose 5-phosphate. The sequence is that of Deoxyribose-phosphate aldolase from Listeria monocytogenes serotype 4b (strain F2365).